A 791-amino-acid chain; its full sequence is Probable potassium transporter 11 (791 aa).

Residues 1 to 49 (MASLSESEGTNRGSMWELDQNLDQPMDEEASRLKNMYREKKFSSLLLLR) lie on the Cytoplasmic side of the membrane. The helical transmembrane segment at 50–70 (LAFQSLGVVFGDLGTSPLYVF) threads the bilayer. The Extracellular segment spans residues 71–87 (YNAFPHGVDDEEDVIGA). The chain crosses the membrane as a helical span at residues 88 to 108 (LSLIIYTLTLIPLLKYVFVVL). The Cytoplasmic segment spans residues 109–175 (RANDNGQGGT…EAHAYKRNCL (67 aa)). A helical transmembrane segment spans residues 176 to 196 (LIVVLIGTCTAIGDGILTPAI). Residues 197–215 (SVLSASGGIKVQNPNMSTD) lie on the Extracellular side of the membrane. A glycan (N-linked (GlcNAc...) asparagine) is linked at asparagine 211. A helical membrane pass occupies residues 216–236 (VVVIVSVIILIGLFSMQHYGT). Residues 237–238 (DK) lie on the Cytoplasmic side of the membrane. The helical transmembrane segment at 239 to 259 (VGWLFAPIVLLWFILIGSVGA) threads the bilayer. Residues 260–289 (LNIHKYKGSVLKAYNPVYIYRYFQRRNSDS) lie on the Extracellular side of the membrane. The chain crosses the membrane as a helical span at residues 290-310 (WASLGGIMLSITGTEALFADL). Residues 311–315 (CHFPV) are Cytoplasmic-facing. The chain crosses the membrane as a helical span at residues 316–338 (FAIQIAFTLIVFPCLLLAYTGQA). The Extracellular segment spans residues 339 to 359 (AYIIAHKDHVADAFYRSIPDS). A helical membrane pass occupies residues 360–380 (IYWPAFVIATAAAIVASQATI). Residues 381–411 (SATYSIIKQALALGCFPRVKIVHTSKKFLGQ) lie on the Cytoplasmic side of the membrane. Residues 412-432 (IYIPDINWVLLILCIAVTAGF) form a helical membrane-spanning segment. The Extracellular portion of the chain corresponds to 433–444 (KNQSQIGNAYGT). The N-linked (GlcNAc...) asparagine glycan is linked to asparagine 434. Residues 445–465 (AVVIVMLVTTFLMVPIMLLVW) form a helical membrane-spanning segment. Over 466 to 468 (KSH) the chain is Cytoplasmic. A helical membrane pass occupies residues 469 to 489 (WILVVTFIVLSLMVEIPYFSA). Residues 490–496 (CLLKIDQ) lie on the Extracellular side of the membrane. A helical transmembrane segment spans residues 497-517 (GGWVPLVIATAFFIIMYVWHF). Residues 518–791 (CTVKRYEFEM…LLNVGQIYYI (274 aa)) are Cytoplasmic-facing.

Belongs to the HAK/KUP transporter (TC 2.A.72.3) family.

It localises to the membrane. In terms of biological role, high-affinity potassium transporter. The polypeptide is Probable potassium transporter 11 (Oryza sativa subsp. japonica (Rice)).